Here is a 271-residue protein sequence, read N- to C-terminus: Solute carrier family 66 member 2 (271 aa).

Helical transmembrane passes span 8 to 28, 49 to 69, and 76 to 96; these read WLLVPLHQLVSWGAAAAMVFG, FSTYVCLVLLVANILRILFWF, and PLLWQSAIMILTMLLMLKLCT. The PQ-loop 1 domain maps to 14-80; it reads HQLVSWGAAA…RRFESPLLWQ (67 aa). S110 carries the post-translational modification Phosphoserine. 3 helical membrane-spanning segments follow: residues 145–165, 168–188, and 232–252; these read DYVQCVLAFTGVAGYITYLSI, ALFVETLGFLAVLTEAMLGVP, and VCGLLQVLVDLAILGQAYAFA. The PQ-loop 2 domain occupies 178 to 233; the sequence is AVLTEAMLGVPQLYRNHRHQSTEGMSIKMVLMWTSGDAFKTAYFLLKGAPLQFSVC.

It localises to the membrane. This Homo sapiens (Human) protein is Solute carrier family 66 member 2.